Here is a 105-residue protein sequence, read N- to C-terminus: UPF0235 protein Mext_2130 (105 aa).

This sequence belongs to the UPF0235 family.

In Methylorubrum extorquens (strain PA1) (Methylobacterium extorquens), this protein is UPF0235 protein Mext_2130.